Here is a 384-residue protein sequence, read N- to C-terminus: Methyl-CpG-binding domain-containing protein 10 (384 aa).

One can recognise an MBD domain in the interval 4 to 74 (TDELVSIELP…SEFEWTTGET (71 aa)). The segment at 65–384 (SEFEWTTGET…QQGAAASVSC (320 aa)) is disordered. Residues 80-91 (RISQKVKATTPT) are compositionally biased toward polar residues. Residues 100 to 224 (KRRSSLTKKD…MEVDTSELEK (125 aa)) adopt a coiled-coil conformation. Basic and acidic residues-rich tracts occupy residues 106-227 (TKKD…KKAG), 234-250 (EPSK…KEAQ), and 257-269 (DVEK…KTEN). The span at 270–284 (KGSVTTEANGEQNVT) shows a compositional bias: polar residues. The segment covering 295–365 (EADKGKESKE…NDMKAEDTNR (71 aa)) has biased composition (basic and acidic residues). The stretch at 310-356 (TEAEANKENDTQESDEKKTEAAANKENETQESDVKKTEAAVAEEKSN) forms a coiled coil. At S323 the chain carries Phosphoserine. Residues 369 to 384 (ANQVQQQQGAAASVSC) show a composition bias toward low complexity.

In terms of tissue distribution, expressed in leaves, buds, flowers, stems and siliques.

The protein resides in the nucleus. Functionally, probable transcriptional regulator. Required for nucleolar dominance that consist in the silencing of rRNA genes inherited from one progenitor in genetic hybrids. The protein is Methyl-CpG-binding domain-containing protein 10 (MBD10) of Arabidopsis thaliana (Mouse-ear cress).